We begin with the raw amino-acid sequence, 131 residues long: Glycine cleavage system H protein (131 aa).

The region spanning 24 to 106 (IATLGISAFA…HGEGWLLKVR (83 aa)) is the Lipoyl-binding domain. K65 bears the N6-lipoyllysine mark.

The protein belongs to the GcvH family. The glycine cleavage system is composed of four proteins: P, T, L and H. (R)-lipoate serves as cofactor.

Its function is as follows. The glycine cleavage system catalyzes the degradation of glycine. The H protein shuttles the methylamine group of glycine from the P protein to the T protein. The sequence is that of Glycine cleavage system H protein from Microcystis aeruginosa (strain NIES-843 / IAM M-2473).